The primary structure comprises 501 residues: uncharacterized protein (501 aa).

The helical transmembrane segment at 26 to 46 threads the bilayer; sequence ILLLLLGLIVLVNIGINVATM. Disordered regions lie at residues 316–384 and 409–501; these read RGTE…VRRR and EASH…EKLN. Positions 476–490 are enriched in low complexity; that stretch reads RSSSLPPASTSTLRP.

It localises to the membrane. This is an uncharacterized protein from Homo sapiens (Human).